A 247-amino-acid chain; its full sequence is Diglucosylglycerate octanoyltransferase (247 aa).

Belongs to the OctT acyltransferase family. In terms of assembly, homotetramer.

It catalyses the reaction (2R)-2-O-[alpha-D-glucopyranosyl-(1-&gt;6)-alpha-D-glucopyranosyl]-glycerate + octanoyl-CoA = (2R)-2-O-[6-O-octanoyl-alpha-D-glucopyranosyl-(1-&gt;6)-alpha-D-glucopyranosyl]-glycerate + CoA. In terms of biological role, sugar octanoyltransferase likely involved in the biosynthesis of mycobacterial methylglucose lipopolysaccharide (MGLP). Catalyzes the transfer of an octanoyl group from octanoyl-CoA to the C6 OH of the second glucose in diglucosylglycerate (DGG). DGG is the preferred acceptor, but to a lesser extent, GG (glucosylglycerate) can also be used as substrate. DGG and GG are the two earliest intermediates in MGLP biosynthesis. This is Diglucosylglycerate octanoyltransferase from Mycobacterium tuberculosis (strain ATCC 25618 / H37Rv).